A 256-amino-acid polypeptide reads, in one-letter code: MTPDVRPLVAGNWKMNGTRASLDQIKAIAEGVRPPLADKVEALICPPTTLLYVATALCTDSPLAIGAQDCHQKPSGAHTGDISAEMIADSFGTYVIVGHSERRTDHAETDHLVRAKAEAAFAAELTAIICIGETADERRAGQELDVIKRQLSASVPDAATAENTVIAYEPIWAIGTGVTPTSGDVEKAHAFMRAELVSRFGDEGRKMRLLYGGSVKPANAGELLGIANVDGALIGGASLKAADFLAIYRAYEALLA.

12–14 is a substrate binding site; the sequence is NWK. Histidine 99 (electrophile) is an active-site residue. Residue glutamate 169 is the Proton acceptor of the active site. Residues glycine 175, serine 214, and 235–236 each bind substrate; that span reads GG.

The protein belongs to the triosephosphate isomerase family. As to quaternary structure, homodimer.

The protein resides in the cytoplasm. It carries out the reaction D-glyceraldehyde 3-phosphate = dihydroxyacetone phosphate. It functions in the pathway carbohydrate biosynthesis; gluconeogenesis. Its pathway is carbohydrate degradation; glycolysis; D-glyceraldehyde 3-phosphate from glycerone phosphate: step 1/1. In terms of biological role, involved in the gluconeogenesis. Catalyzes stereospecifically the conversion of dihydroxyacetone phosphate (DHAP) to D-glyceraldehyde-3-phosphate (G3P). The polypeptide is Triosephosphate isomerase (Rhizobium etli (strain ATCC 51251 / DSM 11541 / JCM 21823 / NBRC 15573 / CFN 42)).